Consider the following 410-residue polypeptide: Class E basic helix-loop-helix protein 41 (410 aa).

A Glycyl lysine isopeptide (Lys-Gly) (interchain with G-Cter in SUMO2) cross-link involves residue lysine 31. A bHLH domain is found at 44 to 99; it reads TYKLPHRLIEKKRRDRINECIAQLKDLLPEHLKLTTLGHLEKAVVLELTLKHLKAL. Residue lysine 121 forms a Glycyl lysine isopeptide (Lys-Gly) (interchain with G-Cter in SUMO2) linkage. The Orange domain maps to 131–166; the sequence is FHSGFQTCAKEVLQYLARFESWTPREPRCAQLVSHL. Disordered regions lie at residues 209–255 and 360–410; these read IQRT…KRPK and GATA…KDAP. A Glycyl lysine isopeptide (Lys-Gly) (interchain with G-Cter in SUMO2) cross-link involves residue lysine 240.

As to quaternary structure, homodimer. Heterodimer with BHLHE40/DEC1. Interacts with CIART. Interacts with BMAL1. Interacts with RXRA. Interacts with NR0B2 and HNF1A. As to expression, expressed in skeletal muscle, brain and lung.

The protein localises to the nucleus. Functionally, transcriptional repressor involved in the regulation of the circadian rhythm by negatively regulating the activity of the clock genes and clock-controlled genes. Acts as the negative limb of a novel autoregulatory feedback loop (DEC loop) which differs from the one formed by the PER and CRY transcriptional repressors (PER/CRY loop). Both these loops are interlocked as it represses the expression of PER1 and in turn is repressed by PER1/2 and CRY1/2. Represses the activity of the circadian transcriptional activator: CLOCK-BMAL1 heterodimer by competing for the binding to E-box elements (5'-CACGTG-3') found within the promoters of its target genes. Negatively regulates its own expression and the expression of DBP and BHLHE41/DEC2. Acts as a corepressor of RXR and the RXR-LXR heterodimers and represses the ligand-induced RXRA/B/G, NR1H3/LXRA, NR1H4 and VDR transactivation activity. Inhibits HNF1A-mediated transactivation of CYP1A2, CYP2E1 and CYP3A11. This chain is Class E basic helix-loop-helix protein 41 (Bhlhe41), found in Mus musculus (Mouse).